A 295-amino-acid polypeptide reads, in one-letter code: ATP synthase gamma chain (295 aa).

It belongs to the ATPase gamma chain family. As to quaternary structure, F-type ATPases have 2 components, CF(1) - the catalytic core - and CF(0) - the membrane proton channel. CF(1) has five subunits: alpha(3), beta(3), gamma(1), delta(1), epsilon(1). CF(0) has three main subunits: a, b and c.

Its subcellular location is the cell membrane. Functionally, produces ATP from ADP in the presence of a proton gradient across the membrane. The gamma chain is believed to be important in regulating ATPase activity and the flow of protons through the CF(0) complex. This Acetivibrio thermocellus (strain ATCC 27405 / DSM 1237 / JCM 9322 / NBRC 103400 / NCIMB 10682 / NRRL B-4536 / VPI 7372) (Clostridium thermocellum) protein is ATP synthase gamma chain.